The chain runs to 388 residues: Interferon alpha/beta receptor 1b (388 aa).

Fibronectin type-III domains are found at residues 5–102 (LPQP…FCPD) and 109–211 (PPSR…TEGD). Residues 217–237 (IFLYFLVSMMVCFLLVLLSSY) form a helical membrane-spanning segment. A disordered region spans residues 308-357 (TAPPSELEQDSGRHIRQDSGDSGIYSTEGGSAQQGRSGGEPIRRDQEVDS). The span at 317-326 (DSGRHIRQDS) shows a compositional bias: basic and acidic residues. Residues 331-342 (IYSTEGGSAQQG) show a composition bias toward polar residues.

It belongs to the type II cytokine receptor family. In terms of assembly, heterodimer with IFNAR2; forming the receptor for type I interferon.

It is found in the cell membrane. The protein resides in the cytoplasm. It localises to the perinuclear region. Functionally, together with IFNAR2, forms the heterodimeric receptor for type I interferons (including interferons alpha, beta, epsilon, omega and kappa). Type I interferon binding activates the JAK-STAT signaling cascade, resulting in transcriptional activation or repression of interferon-regulated genes that encode the effectors of the interferon response. Mechanistically, type I interferon-binding brings the IFNAR1 and IFNAR2 subunits into close proximity with one another, driving their associated Janus kinases (JAKs) (TYK2 bound to IFNAR1 and JAK1 bound to IFNAR2) to cross-phosphorylate one another. The activated kinases phosphorylate specific tyrosine residues on the intracellular domains of IFNAR1 and IFNAR2, forming docking sites for the STAT transcription factors. STAT proteins are then phosphorylated by the JAKs, promoting their translocation into the nucleus to regulate expression of interferon-regulated genes. In Oncorhynchus mykiss (Rainbow trout), this protein is Interferon alpha/beta receptor 1b.